The primary structure comprises 352 residues: Plant intracellular Ras-group-related LRR protein 1 (352 aa).

The interval 1–25 is disordered; that stretch reads MREMGEKRRRGHLNPAGFAGGLHDH. LRR repeat units follow at residues 29–52, 53–75, 77–99, 100–122, 124–146, 147–169, 171–192, 195–217, 218–241, and 243–263; these read KNEE…TMSL, GQVT…IIAR, LNVV…IGCL, SKLK…IEEC, ALEE…GFEL, HSLR…TSHM, ALRA…LENL, LEAL…VGLL, ASLR…GCLT, and LARF…VVEQ. Positions 264–271 match the GVYW; degenerate motif; that stretch reads GLDAMRAY.

Belongs to the SHOC2 family. In terms of tissue distribution, widely expressed but at a lower level in seedlings and stems.

Its function is as follows. Leucine-rich repeat protein that likely mediates protein interactions, possibly in the context of signal transduction. This chain is Plant intracellular Ras-group-related LRR protein 1 (IRL1), found in Oryza sativa subsp. japonica (Rice).